We begin with the raw amino-acid sequence, 455 residues long: 3-isopropylmalate dehydratase large subunit (455 aa).

[4Fe-4S] cluster contacts are provided by Cys336, Cys396, and Cys399.

The protein belongs to the aconitase/IPM isomerase family. LeuC type 1 subfamily. As to quaternary structure, heterodimer of LeuC and LeuD. It depends on [4Fe-4S] cluster as a cofactor.

It catalyses the reaction (2R,3S)-3-isopropylmalate = (2S)-2-isopropylmalate. The protein operates within amino-acid biosynthesis; L-leucine biosynthesis; L-leucine from 3-methyl-2-oxobutanoate: step 2/4. Functionally, catalyzes the isomerization between 2-isopropylmalate and 3-isopropylmalate, via the formation of 2-isopropylmaleate. In Staphylococcus aureus (strain MRSA252), this protein is 3-isopropylmalate dehydratase large subunit.